The primary structure comprises 390 residues: Queuine tRNA-ribosyltransferase (390 aa).

The active-site Proton acceptor is Asp-92. Substrate contacts are provided by residues 92–96 (DSGGF), Asp-146, Gln-195, and Gly-222. The segment at 253-259 (GVGTPED) is RNA binding. Asp-272 functions as the Nucleophile in the catalytic mechanism. An RNA binding; important for wobble base 34 recognition region spans residues 277–281 (TRNAR). Zn(2+) contacts are provided by Cys-310, Cys-312, Cys-315, and His-354.

Belongs to the queuine tRNA-ribosyltransferase family. Homodimer. Within each dimer, one monomer is responsible for RNA recognition and catalysis, while the other monomer binds to the replacement base PreQ1. Zn(2+) is required as a cofactor.

The enzyme catalyses 7-aminomethyl-7-carbaguanine + guanosine(34) in tRNA = 7-aminomethyl-7-carbaguanosine(34) in tRNA + guanine. The protein operates within tRNA modification; tRNA-queuosine biosynthesis. In terms of biological role, catalyzes the base-exchange of a guanine (G) residue with the queuine precursor 7-aminomethyl-7-deazaguanine (PreQ1) at position 34 (anticodon wobble position) in tRNAs with GU(N) anticodons (tRNA-Asp, -Asn, -His and -Tyr). Catalysis occurs through a double-displacement mechanism. The nucleophile active site attacks the C1' of nucleotide 34 to detach the guanine base from the RNA, forming a covalent enzyme-RNA intermediate. The proton acceptor active site deprotonates the incoming PreQ1, allowing a nucleophilic attack on the C1' of the ribose to form the product. After dissociation, two additional enzymatic reactions on the tRNA convert PreQ1 to queuine (Q), resulting in the hypermodified nucleoside queuosine (7-(((4,5-cis-dihydroxy-2-cyclopenten-1-yl)amino)methyl)-7-deazaguanosine). The polypeptide is Queuine tRNA-ribosyltransferase (Delftia acidovorans (strain DSM 14801 / SPH-1)).